The following is a 715-amino-acid chain: Polyribonucleotide nucleotidyltransferase (715 aa).

The Mg(2+) site is built by Asp489 and Asp495. Residues 556–615 enclose the KH domain; it reads PRIETLRIPTEKIREVIGTGGKVIREICEKTGAKINIEDDGTVKVASSDGNSIKAAINWI. Residues 625 to 693 enclose the S1 motif domain; the sequence is GHIYDGTVVK…DRGKVRLSMR (69 aa).

Belongs to the polyribonucleotide nucleotidyltransferase family. Mg(2+) is required as a cofactor.

The protein localises to the cytoplasm. It catalyses the reaction RNA(n+1) + phosphate = RNA(n) + a ribonucleoside 5'-diphosphate. Its function is as follows. Involved in mRNA degradation. Catalyzes the phosphorolysis of single-stranded polyribonucleotides processively in the 3'- to 5'-direction. This chain is Polyribonucleotide nucleotidyltransferase, found in Beijerinckia indica subsp. indica (strain ATCC 9039 / DSM 1715 / NCIMB 8712).